We begin with the raw amino-acid sequence, 180 residues long: Bifunctional protein PyrR (180 aa).

The PRPP-binding signature appears at 101 to 113 (LIVVDDVLFTGRT).

This sequence belongs to the purine/pyrimidine phosphoribosyltransferase family. PyrR subfamily. Homodimer and homohexamer; in equilibrium.

It catalyses the reaction UMP + diphosphate = 5-phospho-alpha-D-ribose 1-diphosphate + uracil. Its function is as follows. Regulates transcriptional attenuation of the pyrimidine nucleotide (pyr) operon by binding in a uridine-dependent manner to specific sites on pyr mRNA. This disrupts an antiterminator hairpin in the RNA and favors formation of a downstream transcription terminator, leading to a reduced expression of downstream genes. In terms of biological role, also displays a weak uracil phosphoribosyltransferase activity which is not physiologically significant. The protein is Bifunctional protein PyrR of Bacillus pumilus (strain SAFR-032).